The chain runs to 133 residues: L-ectoine synthase (133 aa).

This sequence belongs to the ectoine synthase family.

The enzyme catalyses (2S)-4-acetamido-2-aminobutanoate = L-ectoine + H2O. It functions in the pathway amine and polyamine biosynthesis; ectoine biosynthesis; L-ectoine from L-aspartate 4-semialdehyde: step 3/3. Its function is as follows. Catalyzes the circularization of gamma-N-acetyl-alpha,gamma-diaminobutyric acid (ADABA) to ectoine (1,4,5,6-tetrahydro-2-methyl-4-pyrimidine carboxylic acid), which is an excellent osmoprotectant. This chain is L-ectoine synthase, found in Bordetella petrii (strain ATCC BAA-461 / DSM 12804 / CCUG 43448).